Consider the following 974-residue polypeptide: Translation initiation factor IF-2 (974 aa).

Residues 31-376 are disordered; sequence FVKSASSTVE…APAVGGVRLP (346 aa). A compositionally biased stretch (low complexity) spans 52–68; the sequence is PSAKSADSAARPAAKPG. A compositionally biased stretch (pro residues) spans 83–96; it reads GPRPGPKPAAPAPA. Over residues 97-133 the composition is skewed to low complexity; the sequence is APAAAAPAATPAAQAPAPAAPAASTATPAAPASNAPK. Positions 134–147 are enriched in pro residues; sequence PGRPTPAAPAPAAP. 2 stretches are compositionally biased toward low complexity: residues 148 to 166 and 179 to 191; these read AAPA…STGA and RVGN…APAE. Composition is skewed to pro residues over residues 195 to 210 and 253 to 266; these read PRPA…PRPA and RPSP…PNPG. A compositionally biased stretch (low complexity) spans 267–277; sequence AMPARSARPAP. Residues 279–332 show a composition bias toward gly residues; it reads GRPGRPGGAPGGRPGGGGGGYRGGGAPGAGAGAPGGGAPAGGFRGRPGGGGRPG. Over residues 349–358 the composition is skewed to basic residues; it reads RRGRKSKRQK. The tr-type G domain maps to 470 to 641; the sequence is SRPPVVTVMG…AVLLTADAAL (172 aa). The G1 stretch occupies residues 479–486; sequence GHVDHGKT. GTP is bound at residue 479–486; sequence GHVDHGKT. Positions 504–508 are G2; sequence GITQH. The segment at 529–532 is G3; the sequence is DTPG. GTP-binding positions include 529–533 and 583–586; these read DTPGH and NKID. The tract at residues 583–586 is G4; sequence NKID. A G5 region spans residues 619-621; it reads SAK.

Belongs to the TRAFAC class translation factor GTPase superfamily. Classic translation factor GTPase family. IF-2 subfamily.

It is found in the cytoplasm. Its function is as follows. One of the essential components for the initiation of protein synthesis. Protects formylmethionyl-tRNA from spontaneous hydrolysis and promotes its binding to the 30S ribosomal subunits. Also involved in the hydrolysis of GTP during the formation of the 70S ribosomal complex. The polypeptide is Translation initiation factor IF-2 (Rhodococcus opacus (strain B4)).